A 290-amino-acid chain; its full sequence is Endoplasmic reticulum-Golgi intermediate compartment protein 1 (290 aa).

Topologically, residues 1-27 (MSFDVRRFDIYRKVPKDLTQPTYTGAF) are cytoplasmic. The helical transmembrane segment at 28–48 (ISICCCVFMLFLFLSELTGFI) threads the bilayer. At 49-254 (ATEIVNELYV…RRRPFYRFIT (206 aa)) the chain is on the lumenal side. N74 carries an N-linked (GlcNAc...) asparagine glycan. A helical transmembrane segment spans residues 255 to 275 (TICAIIGGTFTVAGIIDSCIF). Residues 276–290 (TASEAWKKIQIGKMS) are Cytoplasmic-facing.

Belongs to the ERGIC family.

The protein resides in the endoplasmic reticulum membrane. It localises to the endoplasmic reticulum-Golgi intermediate compartment membrane. It is found in the golgi apparatus membrane. Functionally, possible role in transport between endoplasmic reticulum and Golgi. This Danio rerio (Zebrafish) protein is Endoplasmic reticulum-Golgi intermediate compartment protein 1 (ergic1).